We begin with the raw amino-acid sequence, 297 residues long: Mitochondrial substrate carrier family protein P (297 aa).

Solcar repeat units follow at residues 12–98 (KPSW…IKNH), 104–189 (SSSF…LKRI), and 201–293 (ISGT…LSNF). 6 helical membrane passes run 15-35 (WVSFLSGGLAGVTAKSAVAPL), 66-86 (GIKGLWRGNSATILRVFPYAA), 107-127 (FQIFLAGSAAGGIAVCATYPL), 165-185 (IQPTLIGILPYGGISFSTFEF), 207-227 (LIAGGIAGGVAQTVAYPFDVV), and 262-282 (ILALYKGLSINYVKVIPTASI).

Belongs to the mitochondrial carrier (TC 2.A.29) family.

It is found in the mitochondrion inner membrane. Mitochondrial solute carriers shuttle metabolites, nucleotides, and cofactors through the mitochondrial inner membrane. Required for the accumulation of coenzyme A in the mitochondrial matrix. This is Mitochondrial substrate carrier family protein P (mcfP) from Dictyostelium discoideum (Social amoeba).